The primary structure comprises 72 residues: Protein RALF-like 12 (72 aa).

Positions 1 to 17 (MKAWVIGLLVICAVVIA) are cleaved as a signal peptide. Disulfide bonds link Cys-34–Cys-43 and Cys-63–Cys-69. Positions 37 to 60 (PNPPPGCNPPGTEQKNPTPVNEYS) are disordered.

It belongs to the plant rapid alkalinization factor (RALF) family.

Its subcellular location is the secreted. Cell signaling peptide that may regulate plant stress, growth, and development. Mediates a rapid alkalinization of extracellular space by mediating a transient increase in the cytoplasmic Ca(2+) concentration leading to a calcium-dependent signaling events through a cell surface receptor and a concomitant activation of some intracellular mitogen-activated protein kinases. The sequence is that of Protein RALF-like 12 (RALFL12) from Arabidopsis thaliana (Mouse-ear cress).